A 1438-amino-acid polypeptide reads, in one-letter code: DNA-directed RNA polymerase subunit beta' (1438 aa).

The Zn(2+) site is built by C70, C72, C85, and C88. Mg(2+) is bound by residues D461, D463, and D465. Zn(2+) is bound by residues C821, C895, C902, and C905. Residues D1413–D1427 show a composition bias toward low complexity. The tract at residues D1413–E1438 is disordered.

This sequence belongs to the RNA polymerase beta' chain family. As to quaternary structure, the RNAP catalytic core consists of 2 alpha, 1 beta, 1 beta' and 1 omega subunit. When a sigma factor is associated with the core the holoenzyme is formed, which can initiate transcription. It depends on Mg(2+) as a cofactor. Zn(2+) serves as cofactor.

It catalyses the reaction RNA(n) + a ribonucleoside 5'-triphosphate = RNA(n+1) + diphosphate. Functionally, DNA-dependent RNA polymerase catalyzes the transcription of DNA into RNA using the four ribonucleoside triphosphates as substrates. The protein is DNA-directed RNA polymerase subunit beta' of Erythrobacter litoralis (strain HTCC2594).